We begin with the raw amino-acid sequence, 434 residues long: Polyadenylate-binding protein RBP47C' (434 aa).

A disordered region spans residues 1 to 50; it reads MADVKVQSESESSDSHPLVDYQSLPPYPPPHPPVEVEENQPKTSPTPPPP. RRM domains are found at residues 103–185, 199–278, and 306–378; these read KTIW…WASF, LSIF…PATP, and TTIF…WGRN.

This sequence belongs to the polyadenylate-binding RBP47 family. In terms of assembly, interacts with the poly(A) tail of mRNA in nucleus.

Its subcellular location is the nucleus. The protein resides in the cytoplasmic granule. Heterogeneous nuclear ribonucleoprotein (hnRNP)-protein binding the poly(A) tail of mRNA and probably involved in some steps of pre-mRNA maturation. The chain is Polyadenylate-binding protein RBP47C' (RBP47C') from Arabidopsis thaliana (Mouse-ear cress).